The following is a 231-amino-acid chain: LexA repressor (231 aa).

A DNA-binding region (H-T-H motif) is located at residues 26 to 46; that stretch reads FDEMKDALDLRSKSGIHRLIT. Residues Ser-152 and Lys-190 each act as for autocatalytic cleavage activity in the active site.

This sequence belongs to the peptidase S24 family. Homodimer.

The catalysed reaction is Hydrolysis of Ala-|-Gly bond in repressor LexA.. In terms of biological role, represses a number of genes involved in the response to DNA damage (SOS response), including recA and lexA. In the presence of single-stranded DNA, RecA interacts with LexA causing an autocatalytic cleavage which disrupts the DNA-binding part of LexA, leading to derepression of the SOS regulon and eventually DNA repair. The sequence is that of LexA repressor from Dinoroseobacter shibae (strain DSM 16493 / NCIMB 14021 / DFL 12).